The primary structure comprises 275 residues: NH(3)-dependent NAD(+) synthetase (275 aa).

46-53 contributes to the ATP binding site; the sequence is GISGGQDS. Asp-52 serves as a coordination point for Mg(2+). Arg-140 is a deamido-NAD(+) binding site. ATP is bound at residue Thr-160. Residue Glu-165 coordinates Mg(2+). Positions 173 and 180 each coordinate deamido-NAD(+). Lys-189 and Thr-211 together coordinate ATP. Residue 260-261 coordinates deamido-NAD(+); that stretch reads HK.

Belongs to the NAD synthetase family. Homodimer.

The catalysed reaction is deamido-NAD(+) + NH4(+) + ATP = AMP + diphosphate + NAD(+) + H(+). Its pathway is cofactor biosynthesis; NAD(+) biosynthesis; NAD(+) from deamido-NAD(+) (ammonia route): step 1/1. Its function is as follows. Catalyzes the ATP-dependent amidation of deamido-NAD to form NAD. Uses ammonia as a nitrogen source. The protein is NH(3)-dependent NAD(+) synthetase of Shigella dysenteriae serotype 1 (strain Sd197).